Reading from the N-terminus, the 372-residue chain is MIPGSTSGISFSRILSRQTSHQDATQHTDAQQAEIQQAAEDSSPGAEVQKFVQSTDEMSAALAQFRNRRDYEKKSSNLSNSFERVLEDEALPKAKQILKLISVHGGALEDFLRQARSLFPDPSDLVLVLRELLRRKDLEEIVRKKLESLLKHVEEQTDPKTLKAGINCALKARLFGKTLSLKPGLLRASYRQFIQSESHEVEIYSDWIASYGYQRRLVVLDFIEGSLLTDIDANDASCSRLEFGQLLRRLTQLKMLRSADLLFVSTLLSYSFTKAFNAEESSWLLLMLSLLQQPHEVDSLLADIIGLNALLLSHKEHASFLQIFYQVCKAIPSSLFYEEYWQEELLMALRSMTDIAYKHEMAEQRRTIEKLS.

A compositionally biased stretch (polar residues) spans 1–19; sequence MIPGSTSGISFSRILSRQT. Residues 1–46 are disordered; that stretch reads MIPGSTSGISFSRILSRQTSHQDATQHTDAQQAEIQQAAEDSSPGA. Positions 21–40 are enriched in low complexity; the sequence is HQDATQHTDAQQAEIQQAAE.

It is found in the cell membrane. Its function is as follows. Involved in the triggering of intracellular events that lead to microbial internalization. These events include increase in calcium level, redistribution of actin microfilaments, and changes in the normal structure of the microvilli. Encoded within the type III secretion system (SPI-1 T3SS), it is essential for the translocation of protein effectors into host cells. Forms a complex with SipB and SipC in the presence of their chaperone SicA. Positively regulates the secretion of SPI-1 T3SS effector proteins SipB, SipC and SipD and negatively influences the secretion of SipA, SopA and SptP. This chain is Invasion protein InvE (invE), found in Salmonella typhimurium (strain LT2 / SGSC1412 / ATCC 700720).